Here is a 238-residue protein sequence, read N- to C-terminus: Pyridoxine 5'-phosphate synthase (238 aa).

Residues N7 and R18 each contribute to the 3-amino-2-oxopropyl phosphate site. H43 acts as the Proton acceptor in catalysis. 1-deoxy-D-xylulose 5-phosphate contacts are provided by R45 and H50. Catalysis depends on E70, which acts as the Proton acceptor. 1-deoxy-D-xylulose 5-phosphate is bound at residue T100. H190 acts as the Proton donor in catalysis. Residues D191 and 213–214 (GH) each bind 3-amino-2-oxopropyl phosphate.

The protein belongs to the PNP synthase family. Homooctamer; tetramer of dimers.

It localises to the cytoplasm. The catalysed reaction is 3-amino-2-oxopropyl phosphate + 1-deoxy-D-xylulose 5-phosphate = pyridoxine 5'-phosphate + phosphate + 2 H2O + H(+). Its pathway is cofactor biosynthesis; pyridoxine 5'-phosphate biosynthesis; pyridoxine 5'-phosphate from D-erythrose 4-phosphate: step 5/5. Functionally, catalyzes the complicated ring closure reaction between the two acyclic compounds 1-deoxy-D-xylulose-5-phosphate (DXP) and 3-amino-2-oxopropyl phosphate (1-amino-acetone-3-phosphate or AAP) to form pyridoxine 5'-phosphate (PNP) and inorganic phosphate. The chain is Pyridoxine 5'-phosphate synthase from Cytophaga hutchinsonii (strain ATCC 33406 / DSM 1761 / CIP 103989 / NBRC 15051 / NCIMB 9469 / D465).